The sequence spans 176 residues: Ribosome maturation factor RimM (176 aa).

Residues 93–168 (DDEVYIEDIL…TIRITPPPGL (76 aa)) form the PRC barrel domain.

It belongs to the RimM family. Binds ribosomal protein uS19.

It is found in the cytoplasm. An accessory protein needed during the final step in the assembly of 30S ribosomal subunit, possibly for assembly of the head region. Essential for efficient processing of 16S rRNA. May be needed both before and after RbfA during the maturation of 16S rRNA. It has affinity for free ribosomal 30S subunits but not for 70S ribosomes. In Oleidesulfovibrio alaskensis (strain ATCC BAA-1058 / DSM 17464 / G20) (Desulfovibrio alaskensis), this protein is Ribosome maturation factor RimM.